The chain runs to 223 residues: MDGVDELLLRKFNLTLPPGLLRTAFVHKSFSFENGACQNNERLEFLGDAVLGLVVSHYLFETCPEYTEGQLSAARSYIVSGTSIAQIAKELNLGQFMLLGKGEKLAGGMDKTSLLADLLESLIGAVMVDQGFESARDFVLALVGEKLRQVGEFSVDDPKTKLQKLTRTQLVYEVVTEGPPHSRTFKASVIVNEKRFFGQGSSKKQAQVAAAMSALASLENKSS.

Residues Met1–Gly131 enclose the RNase III domain. Glu44 is a binding site for Mg(2+). Residue Asp48 is part of the active site. Residues Asp117 and Glu120 each contribute to the Mg(2+) site. The active site involves Glu120. Positions Asp157–Asn220 constitute a DRBM domain.

It belongs to the ribonuclease III family. As to quaternary structure, homodimer. Requires Mg(2+) as cofactor.

It localises to the cytoplasm. The catalysed reaction is Endonucleolytic cleavage to 5'-phosphomonoester.. In terms of biological role, digests double-stranded RNA. Involved in the processing of primary rRNA transcript to yield the immediate precursors to the large and small rRNAs (23S and 16S). Processes some mRNAs, and tRNAs when they are encoded in the rRNA operon. Processes pre-crRNA and tracrRNA of type II CRISPR loci if present in the organism. In Tropheryma whipplei (strain Twist) (Whipple's bacillus), this protein is Ribonuclease 3.